The sequence spans 750 residues: MIIRSPEPEVKIVVDRDPVKTSFEEWARPGHFSRTLAKGPDTTTWIWNLHADAHDFDSHTGDLEEISRKVFSAHFGQLSIIFLWLSGMYFHGARFSNYEAWLSDPTHIGPSAQVVWPIVGQEILNGDVGGGFRGIQITSGFFQLWRASGITSELQLYCTAIGALIFAALMLFAGWFHYHKAAPKLAWFQDVESMLNHHLAGLLGLGSLSWAGHQIHVSLPINQFLDAGVDPKEIPLPHEFILNRDLLAQLYPSFAEGATPFFTLNWSKYAEFLTFRGGLDPVTGGLWLTDIAHHHLAIAILFLIAGHMYRTNWGIGHGLKDILEAHKGPFTGQGHKGLYEILTTSWHAQLSLNLAMLGSTTIVVAHHMYSMPPYPYLATDYGTQLSLFTHHMWIGGFLIVGAAAHAAIFMVRDYDPTTRYNDLLDRVLRHRDAIISHLNWVCIFLGFHSFGLYIHNDTMSALGRPQDMFSDTAIQLQPIFAQWVQNIHATAPGVTAPGATTSTSLTWGGGELVAVGGKVALLPIPLGTADFLVHHIHAFTIHVTVLILLKGVLFARSSRLIPDKANLGFRFPCDGPGRGGTCQVSAWDHVFLGLFWMYNAISVVIFHFSWKMQSDVWGTISDQGVVTHITGGNFAQSSITINGWLRDFLWAQASQVIQSYGSSLSAYGLFFLGAHFVWAFSLMFLFSGRGYWQELIESIVWAHNKLKVAPATQPRALSIIQGRAVGVTHYLLGGIATTWAFFLARIIAVG.

The next 8 membrane-spanning stretches (helical) occupy residues 70 to 93 (VFSA…FHGA), 156 to 179 (LYCT…FHYH), 195 to 219 (LNHH…HVSL), 291 to 309 (IAHH…GHMY), 346 to 369 (WHAQ…HHMY), 385 to 411 (LSLF…IFMV), 433 to 455 (AIIS…LYIH), and 531 to 549 (FLVH…LILL). 2 residues coordinate [4Fe-4S] cluster: Cys-573 and Cys-582. Helical transmembrane passes span 589–610 (HVFL…HFSW) and 664–686 (LSAY…MFLF). His-675 contacts chlorophyll a'. Chlorophyll a-binding residues include Met-683 and Tyr-691. Phylloquinone is bound at residue Trp-692. Residues 724-744 (AVGVTHYLLGGIATTWAFFLA) form a helical membrane-spanning segment.

The protein belongs to the PsaA/PsaB family. The PsaA/B heterodimer binds the P700 chlorophyll special pair and subsequent electron acceptors. PSI consists of a core antenna complex that captures photons, and an electron transfer chain that converts photonic excitation into a charge separation. The eukaryotic PSI reaction center is composed of at least 11 subunits. P700 is a chlorophyll a/chlorophyll a' dimer, A0 is one or more chlorophyll a, A1 is one or both phylloquinones and FX is a shared 4Fe-4S iron-sulfur center. is required as a cofactor.

The protein localises to the plastid. It is found in the chloroplast thylakoid membrane. It catalyses the reaction reduced [plastocyanin] + hnu + oxidized [2Fe-2S]-[ferredoxin] = oxidized [plastocyanin] + reduced [2Fe-2S]-[ferredoxin]. Its function is as follows. PsaA and PsaB bind P700, the primary electron donor of photosystem I (PSI), as well as the electron acceptors A0, A1 and FX. PSI is a plastocyanin-ferredoxin oxidoreductase, converting photonic excitation into a charge separation, which transfers an electron from the donor P700 chlorophyll pair to the spectroscopically characterized acceptors A0, A1, FX, FA and FB in turn. Oxidized P700 is reduced on the lumenal side of the thylakoid membrane by plastocyanin. This is Photosystem I P700 chlorophyll a apoprotein A1 from Triticum aestivum (Wheat).